Consider the following 648-residue polypeptide: L-aspartate oxidase 2-b, chloroplastic (648 aa).

FAD contacts are provided by residues 98–101, K120, 127–134, and D298; these read SGIA and STNYAQGG. R373 acts as the Proton donor/acceptor in catalysis. FAD-binding positions include E458 and 474 to 475; that span reads SL.

The protein belongs to the FAD-dependent oxidoreductase 2 family. NadB subfamily. Requires FAD as cofactor.

The protein localises to the plastid. It localises to the chloroplast. It catalyses the reaction L-aspartate + O2 = iminosuccinate + H2O2. The protein operates within alkaloid biosynthesis; nicotine biosynthesis. It functions in the pathway cofactor biosynthesis; NAD(+) biosynthesis; iminoaspartate from L-aspartate (oxidase route): step 1/1. Functionally, involved in the biosynthesis of pyridine alkaloid natural products, leading mainly to the production of anabasine, anatabine, nicotine and nornicotine, effective deterrents against herbivores with antiparasitic and pesticide properties (neurotoxins); nornicotine serves as the precursor in the synthesis of the carcinogen compound N'-nitrosonornicotine (NNN). Catalyzes the oxidation of L-aspartate to iminoaspartate. This chain is L-aspartate oxidase 2-b, chloroplastic, found in Nicotiana tabacum (Common tobacco).